A 326-amino-acid polypeptide reads, in one-letter code: Type II methyltransferase M.CviAII (326 aa).

This sequence belongs to the N(4)/N(6)-methyltransferase family.

It carries out the reaction a 2'-deoxyadenosine in DNA + S-adenosyl-L-methionine = an N(6)-methyl-2'-deoxyadenosine in DNA + S-adenosyl-L-homocysteine + H(+). Functionally, an alpha subtype methylase that recognizes the double-stranded sequence 5'-CATG-3', methylates A-2 on both strands and protects the DNA from cleavage by the CviAII endonuclease. The polypeptide is Type II methyltransferase M.CviAII (CVIAIIM) (Paramecium bursaria Chlorella virus 1 (PBCV-1)).